A 271-amino-acid polypeptide reads, in one-letter code: Beta-lactamase (271 aa).

Serine 46 serves as the catalytic Acyl-ester intermediate. Residue 210–212 coordinates substrate; the sequence is KTG.

This sequence belongs to the class-A beta-lactamase family. In terms of assembly, monomer.

It catalyses the reaction a beta-lactam + H2O = a substituted beta-amino acid. Its function is as follows. Hydrolyzes broad-spectrum beta-lactam antibiotics. Active against cephalosporins. The sequence is that of Beta-lactamase from Proteus vulgaris.